A 125-amino-acid chain; its full sequence is Glycine cleavage system H protein (125 aa).

The Lipoyl-binding domain occupies 19–101 (GAVVGITDFA…NGSGWFFKLT (83 aa)). At lysine 60 the chain carries N6-lipoyllysine.

This sequence belongs to the GcvH family. In terms of assembly, the glycine cleavage system is composed of four proteins: P, T, L and H. (R)-lipoate is required as a cofactor.

The glycine cleavage system catalyzes the degradation of glycine. The H protein shuttles the methylamine group of glycine from the P protein to the T protein. In Methylocella silvestris (strain DSM 15510 / CIP 108128 / LMG 27833 / NCIMB 13906 / BL2), this protein is Glycine cleavage system H protein.